The sequence spans 538 residues: Cytochrome c-552 (538 aa).

The first 55 residues, 1–55, serve as a signal peptide directing secretion; sequence MKIYLRFVWILIIILNFLLNLFITTNGVIIVNAFKKSLIVAASFASLSLFNSATA. H133 is a heme c binding site. Heme-binding residues include C161, C164, and K165. Positions 199, 202, 203, 264, 267, and 268 each coordinate heme c. Ca(2+) is bound by residues E270, Y271, K316, and Q318. Y271 lines the substrate pocket. A substrate-binding site is contributed by H319. Residues H330, C337, C340, H341, H356, C369, C372, H373, and H448 each coordinate heme c.

Belongs to the cytochrome c-552 family. The cofactor is Ca(2+). Heme c is required as a cofactor.

It localises to the periplasm. It catalyses the reaction 6 Fe(III)-[cytochrome c] + NH4(+) + 2 H2O = 6 Fe(II)-[cytochrome c] + nitrite + 8 H(+). It participates in nitrogen metabolism; nitrate reduction (assimilation). Functionally, catalyzes the reduction of nitrite to ammonia, consuming six electrons in the process. This is Cytochrome c-552 from Haemophilus influenzae (strain ATCC 51907 / DSM 11121 / KW20 / Rd).